We begin with the raw amino-acid sequence, 346 residues long: NADH-ubiquinone oxidoreductase chain 2 (346 aa).

10 consecutive transmembrane segments (helical) span residues 3–23 (PIIF…VMIS), 25–45 (HWLL…PIMM), 67–87 (SMLL…WTVM), 96–116 (MLMT…FWVP), 122–142 (IPLS…MSVL), 145–165 (IFPS…ILIG), 200–220 (TLLN…MFMA), 238–258 (IMTI…PLSG), 273–293 (NSII…YFYM), and 324–344 (FLPT…MLSV).

Belongs to the complex I subunit 2 family. As to quaternary structure, core subunit of respiratory chain NADH dehydrogenase (Complex I) which is composed of 45 different subunits. Interacts with TMEM242.

It is found in the mitochondrion inner membrane. The catalysed reaction is a ubiquinone + NADH + 5 H(+)(in) = a ubiquinol + NAD(+) + 4 H(+)(out). Its function is as follows. Core subunit of the mitochondrial membrane respiratory chain NADH dehydrogenase (Complex I) which catalyzes electron transfer from NADH through the respiratory chain, using ubiquinone as an electron acceptor. Essential for the catalytic activity and assembly of complex I. This Bos mutus grunniens (Wild yak) protein is NADH-ubiquinone oxidoreductase chain 2.